Reading from the N-terminus, the 142-residue chain is Small ribosomal subunit protein uS12 (142 aa).

Residues 1 to 44 (MANGKYAARKLKQDRQQRRWSDSEYARRERGLGAKSDPLEGAPQ) form a disordered region. Positions 11–32 (LKQDRQQRRWSDSEYARRERGL) are enriched in basic and acidic residues.

It belongs to the universal ribosomal protein uS12 family. Part of the 30S ribosomal subunit.

Its function is as follows. With S4 and S5 plays an important role in translational accuracy. Located at the interface of the 30S and 50S subunits. The protein is Small ribosomal subunit protein uS12 of Haloquadratum walsbyi (strain DSM 16790 / HBSQ001).